The chain runs to 605 residues: DNA primase (605 aa).

The CHC2-type zinc finger occupies Cys-38–Cys-62. The region spanning Asp-260–Gly-341 is the Toprim domain. Residues Glu-266, Asp-310, and Asp-312 each coordinate Mg(2+).

It belongs to the DnaG primase family. In terms of assembly, monomer. Interacts with DnaB. Requires Zn(2+) as cofactor. It depends on Mg(2+) as a cofactor.

It carries out the reaction ssDNA + n NTP = ssDNA/pppN(pN)n-1 hybrid + (n-1) diphosphate.. Its function is as follows. RNA polymerase that catalyzes the synthesis of short RNA molecules used as primers for DNA polymerase during DNA replication. This Staphylococcus aureus (strain Mu50 / ATCC 700699) protein is DNA primase.